Here is a 367-residue protein sequence, read N- to C-terminus: MKEPLDLSKYSVRTDLAVEAHQMLQERQEEEKGIQGVIVKEREEEGVIITKVTIDEVASESMGKKPGNYLTLEVQGIRQQDTELQQKVERIFAKEFSYFLEEVGVTKEASCLIVGLGNWNVTPDALGPIVVENVLVTRHLFQLQPESVEEGFRPVSAIRPGVMGITGIETSDVIYGIIEKTKPDFVIAIDALAARSIERVNSTIQISDTGIHPGSGVGNKRKELSKETLGIPVIAIGVPTVVDAVSITSDTIDFILKHFGREMKEGNKPSRSLLPAGFTFGEKKKLTEEDMPDEKSRNMFLGAVGTLEDEEKRKLIYEVLSPLGHNLMVTPKEVDAFIEDMANVIASGLNAALHHQIDQDNTGAYTH.

Residues 1 to 15 (MKEPLDLSKYSVRTD) constitute a propeptide that is removed on maturation.

This sequence belongs to the peptidase A25 family. As to quaternary structure, homotetramer. Autoproteolytically processed. The inactive tetrameric zymogen termed p46 autoprocesses to a smaller form termed p41, which is active only during spore germination.

It catalyses the reaction Endopeptidase action with P4 Glu or Asp, P1 preferably Glu &gt; Asp, P1' hydrophobic and P2' Ala.. Functionally, initiates the rapid degradation of small, acid-soluble proteins during spore germination. The polypeptide is Germination protease (Bacillus thuringiensis subsp. konkukian (strain 97-27)).